A 356-amino-acid chain; its full sequence is Histidinol-phosphate aminotransferase (356 aa).

Position 214 is an N6-(pyridoxal phosphate)lysine (K214).

This sequence belongs to the class-II pyridoxal-phosphate-dependent aminotransferase family. Histidinol-phosphate aminotransferase subfamily. Homodimer. The cofactor is pyridoxal 5'-phosphate.

The enzyme catalyses L-histidinol phosphate + 2-oxoglutarate = 3-(imidazol-4-yl)-2-oxopropyl phosphate + L-glutamate. It functions in the pathway amino-acid biosynthesis; L-histidine biosynthesis; L-histidine from 5-phospho-alpha-D-ribose 1-diphosphate: step 7/9. In Shigella boydii serotype 4 (strain Sb227), this protein is Histidinol-phosphate aminotransferase.